Here is a 311-residue protein sequence, read N- to C-terminus: Meteorin-like protein (311 aa).

The signal sequence occupies residues 1–45; sequence MRGVVWAARRRAGQQWPRSPGPGPGPPPPPPLLLLLLLLLGGASA. Cysteine 52 and cysteine 75 are oxidised to a cystine. N-linked (GlcNAc...) asparagine glycosylation occurs at asparagine 103. 4 cysteine pairs are disulfide-bonded: cysteine 107/cysteine 143, cysteine 188/cysteine 260, cysteine 191/cysteine 284, and cysteine 201/cysteine 306.

This sequence belongs to the meteorin family. As to expression, abundantly expressed in adipose tissue.

The protein localises to the secreted. In terms of biological role, hormone induced following exercise or cold exposure that promotes energy expenditure. Induced either in the skeletal muscle after exercise or in adipose tissue following cold exposure and is present in the circulation. Able to stimulate energy expenditure associated with the browning of the white fat depots and improves glucose tolerance. Does not promote an increase in a thermogenic gene program via direct action on adipocytes, but acts by stimulating several immune cell subtypes to enter the adipose tissue and activate their prothermogenic actions. Stimulates an eosinophil-dependent increase in IL4 expression and promotes alternative activation of adipose tissue macrophages, which are required for the increased expression of the thermogenic and anti-inflammatory gene programs in fat. Required for some cold-induced thermogenic responses, suggesting a role in metabolic adaptations to cold temperatures. This chain is Meteorin-like protein (Metrnl), found in Rattus norvegicus (Rat).